A 340-amino-acid polypeptide reads, in one-letter code: Large ribosomal subunit protein uL10 (340 aa).

A disordered region spans residues 305–340; that stretch reads APQPAEEKVEEAEEEEEEEEEASEEEALAGLGALFG. The span at 312–331 shows a compositional bias: acidic residues; the sequence is KVEEAEEEEEEEEEASEEEA.

Belongs to the universal ribosomal protein uL10 family. In terms of assembly, part of the 50S ribosomal subunit. Forms part of the ribosomal stalk which helps the ribosome interact with GTP-bound translation factors. Forms a heptameric L10(L12)2(L12)2(L12)2 complex, where L10 forms an elongated spine to which the L12 dimers bind in a sequential fashion.

Forms part of the ribosomal stalk, playing a central role in the interaction of the ribosome with GTP-bound translation factors. This is Large ribosomal subunit protein uL10 from Thermococcus gammatolerans (strain DSM 15229 / JCM 11827 / EJ3).